Consider the following 565-residue polypeptide: Periplasmic trehalase (565 aa).

The signal sequence occupies residues Met1–Ala30. Residues Arg152, Trp159 to Asp160, Asn196, Arg205 to Gln207, Arg277 to Glu279, and Gly310 each bind substrate. Residues Asp312 and Glu496 each act as proton donor/acceptor in the active site. Glu511 serves as a coordination point for substrate. Positions Pro538–Pro565 are disordered. Over residues Thr548–Pro565 the composition is skewed to polar residues.

The protein belongs to the glycosyl hydrolase 37 family. As to quaternary structure, monomer.

It is found in the periplasm. It carries out the reaction alpha,alpha-trehalose + H2O = alpha-D-glucose + beta-D-glucose. Provides the cells with the ability to utilize trehalose at high osmolarity by splitting it into glucose molecules that can subsequently be taken up by the phosphotransferase-mediated uptake system. The polypeptide is Periplasmic trehalase (Escherichia coli O139:H28 (strain E24377A / ETEC)).